The primary structure comprises 131 residues: Small ribosomal subunit protein uS8 (131 aa).

This sequence belongs to the universal ribosomal protein uS8 family. In terms of assembly, part of the 30S ribosomal subunit. Contacts proteins S5 and S12.

Its function is as follows. One of the primary rRNA binding proteins, it binds directly to 16S rRNA central domain where it helps coordinate assembly of the platform of the 30S subunit. This Chlorobium chlorochromatii (strain CaD3) protein is Small ribosomal subunit protein uS8.